The following is a 673-amino-acid chain: MSKPFKLNSAFKPSGDQPEAIRRLEEGLEDGLAHQTLLGVTGSGKTFTIANVIADLQRPTMVLAPNKTLAAQLYGEMKEFFPENAVEYFVSYYDYYQPEAYVPSSDTFIEKDASVNEHIEQMRLSATKAMLERRDVIVVASVSAIYGLGDPDLYLKMMLHLTVGMIIDQRAILRRLAELQYARNDQAFQRGTFRVRGEVIDIFPAESDDIALRVELFDEEVERLSLFDPLTGQIVSTIPRFTIYPKTHYVTPRERIVQAMEEIKEELAARRKVLLENNKLLEEQRLTQRTQFDLEMMDELGYCSGIENYSRFLSGRGPGEPPPTLFDYLPADGLLVVDESHVTIPQIGGMYRGDRARKETLVEYGFRLPSALDNRPLKFEEFEALAPQTIYVSATPGNYELEKSGGDVVDQVVRPTGLLDPIIEVRPVATQVDDLLSEIRQRAAINERVLVTTLTKRMAEDLTEYLEEHGERVRYLHSDIDTVERMEIIRDLRLGEFDVLVGINLLREGLDMPEVSLVAILDADKEGFLRSERSLIQTIGRAARNVNGKAILYGDRSTPSMAKAIGETERRREKQQKYNEEHGITPQGLNKKVVDILALGQNIAKTKAKGRGKSRPIVEPDNVPMDMLPKALQQKIHELEGLMMQHAQNLEFEEAAQIRDQLHQLRELFIAAS.

One can recognise a Helicase ATP-binding domain in the interval 26–414; sequence EGLEDGLAHQ…GGDVVDQVVR (389 aa). An ATP-binding site is contributed by 39–46; the sequence is GVTGSGKT. Positions 92–115 match the Beta-hairpin motif; it reads YYDYYQPEAYVPSSDTFIEKDASV. The Helicase C-terminal domain maps to 431–597; it reads QVDDLLSEIR…GLNKKVVDIL (167 aa). The UVR domain maps to 633-668; it reads QQKIHELEGLMMQHAQNLEFEEAAQIRDQLHQLREL.

The protein belongs to the UvrB family. As to quaternary structure, forms a heterotetramer with UvrA during the search for lesions. Interacts with UvrC in an incision complex.

It is found in the cytoplasm. Functionally, the UvrABC repair system catalyzes the recognition and processing of DNA lesions. A damage recognition complex composed of 2 UvrA and 2 UvrB subunits scans DNA for abnormalities. Upon binding of the UvrA(2)B(2) complex to a putative damaged site, the DNA wraps around one UvrB monomer. DNA wrap is dependent on ATP binding by UvrB and probably causes local melting of the DNA helix, facilitating insertion of UvrB beta-hairpin between the DNA strands. Then UvrB probes one DNA strand for the presence of a lesion. If a lesion is found the UvrA subunits dissociate and the UvrB-DNA preincision complex is formed. This complex is subsequently bound by UvrC and the second UvrB is released. If no lesion is found, the DNA wraps around the other UvrB subunit that will check the other stand for damage. This Shigella flexneri protein is UvrABC system protein B.